A 208-amino-acid polypeptide reads, in one-letter code: Guanylate kinase (208 aa).

A Guanylate kinase-like domain is found at 4–185; sequence GNLYILSAPS…ALADFQAILR (182 aa). An ATP-binding site is contributed by 11 to 18; that stretch reads APSGAGKS.

Belongs to the guanylate kinase family.

The protein localises to the cytoplasm. The catalysed reaction is GMP + ATP = GDP + ADP. Essential for recycling GMP and indirectly, cGMP. The polypeptide is Guanylate kinase (gmk) (Pasteurella multocida (strain Pm70)).